The following is a 342-amino-acid chain: Manganese-dependent ADP-ribose/CDP-alcohol diphosphatase (342 aa).

The Zn(2+) site is built by aspartate 18, glutamine 20, aspartate 67, asparagine 103, histidine 239, histidine 276, and histidine 278.

This sequence belongs to the ADPRibase-Mn family. As to quaternary structure, monomer. The cofactor is Mg(2+).

The enzyme catalyses CDP-choline + H2O = phosphocholine + CMP + 2 H(+). It catalyses the reaction ADP-D-ribose + H2O = D-ribose 5-phosphate + AMP + 2 H(+). It carries out the reaction CDP-glycerol + H2O = sn-glycerol 3-phosphate + CMP + 2 H(+). In terms of biological role, hydrolyzes ADP-ribose, IDP-ribose, CDP-glycerol, CDP-choline and CDP-ethanolamine, but not other non-reducing ADP-sugars or CDP-glucose. The chain is Manganese-dependent ADP-ribose/CDP-alcohol diphosphatase (adprm) from Xenopus tropicalis (Western clawed frog).